Consider the following 369-residue polypeptide: Endophilin-A (369 aa).

The BAR domain maps to 18–248 (TEKMGGAEGT…LQEKRSEAES (231 aa)). The stretch at 227-247 (QCADVLRGLQETLQEKRSEAE) forms a coiled coil. Positions 275-294 (GTPSHISSSASPLPSPMRSP) are enriched in low complexity. Residues 275–296 (GTPSHISSSASPLPSPMRSPAK) are disordered. Positions 305-364 (QQQPCCQALYDFDPENPGELGFKENDIITLLNRVDDNWYEGAVNGRTGYFPQSYVQVQVP) constitute an SH3 domain.

The protein belongs to the endophilin family.

Its subcellular location is the cytoplasm. It is found in the membrane. Its function is as follows. Required presynaptically at the neuromuscular junction. Implicated in synaptic vesicle endocytosis. The chain is Endophilin-A from Drosophila pseudoobscura pseudoobscura (Fruit fly).